A 675-amino-acid chain; its full sequence is Protein PALS1 (675 aa).

Residues 1–78 (MTTSHMNGHV…RREEEGKKQE (78 aa)) are disordered. The required for the correct localization of PALS1 and PATJ at cell-cell contacts and the normal formation of tight junctions and adherens junctions stretch occupies residues 1–345 (MTTSHMNGHV…QQIKPPPAKE (345 aa)). 2 stretches are compositionally biased toward basic and acidic residues: residues 10–36 (VTEE…REMA) and 54–78 (AQLE…KKQE). Residues Ser-14 and Ser-25 each carry the phosphoserine modification. The interaction with PARD6B stretch occupies residues 21-140 (VDLASPEEHQ…LKHIQHTLVD (120 aa)). Phosphoserine occurs at positions 83 and 84. L27 domains lie at 120 to 177 (KILE…NKAS) and 179 to 235 (PFPL…MQLE). An interaction with LIN7C region spans residues 181–243 (PLISNAQDLA…LEPFTDERVY (63 aa)). The PDZ domain occupies 256-336 (IVRIEKARDI…TLTFVLIPSQ (81 aa)). Positions 345–417 (ETVIHVKAHF…PGKSFQQQRE (73 aa)) constitute an SH3 domain. Residues 479-660 (KRPIILIGPQ…AYQELLRLIN (182 aa)) enclose the Guanylate kinase-like domain. 486–493 (GPQNCGQN) lines the ATP pocket.

It belongs to the MAGUK family. In terms of assembly, heterodimer with MPP1. Forms a heterotrimeric complex composed of PALS1, LIN7B and PATJ; the N-terminal L27 domain of PALS1 interacts with the L27 domain of PATJ and the C-terminal L27 domain of PALS1 interacts with the L27 domain of LIN7B. Component of a complex composed of PALS1, CRB1 and MPP4. Component of a complex whose core is composed of ARHGAP17, AMOT, PALS1, PATJ and PARD3/PAR3. Component of a complex composed of PALS1, CRB1 and EPB41L5. Within the complex, interacts (via HOOK domain) with EPB41L5 (via FERM domain), and interacts with CRB1 (via intracellular domain). Component of a complex composed of PALS1, MPP3 and CRB1; PALS1 acts as a bridging protein between MPP3 (via guanylate kinase-like domain) and CRB1. Component of a complex composed of CRB3, PALS1 and PATJ. As part of the Crumbs complex; interacts with WWP1, the interaction is enhanced by AMOTL2 and facilitates WWP1 localization to the plasma membrane. The Crumbs complex promotes monoubiquitination of AMOTL2 by WWP1, which activates the Hippo signaling pathway. Interacts (via PDZ domain) with PATJ (via N-terminus). Interacts with EZR. Interacts (via PDZ domain) with CRB1 (via C-terminal ERLI motif). While the PDZ domain is sufficient for interaction with CRB1, the adjacent SH3 and guanylate kinase-like domains are likely to contribute to a high affinity interaction. Interacts with WWTR1/TAZ (via WW domain). Interacts with MPP7. Interacts (via PDZ domain) with CRB3 (via C-terminus). Interacts with LIN7C. Interacts with MPDZ. Interacts with PARD6B. Interacts with SC6A1. Interacts with CDH5; the interaction promotes PALS1 localization to cell junctions and is required for CDH5-mediated vascular lumen formation and endothelial cell. Interacts with NPHP1 (via coiled coil and SH3 domains). Interacts with NPHP4. Interacts with CRB2.

It localises to the golgi apparatus. The protein localises to the cell membrane. The protein resides in the endomembrane system. It is found in the cell junction. Its subcellular location is the tight junction. It localises to the adherens junction. The protein localises to the cell projection. The protein resides in the axon. It is found in the perikaryon. Its subcellular location is the apical cell membrane. Plays a role in tight junction biogenesis and in the establishment of cell polarity in epithelial cells. Also involved in adherens junction biogenesis by ensuring correct localization of the exocyst complex protein EXOC4/SEC8 which allows trafficking of adherens junction structural component CDH1 to the cell surface. Plays a role through its interaction with CDH5 in vascular lumen formation and endothelial membrane polarity. Required during embryonic and postnatal retinal development. Required for the maintenance of cerebellar progenitor cells in an undifferentiated proliferative state, preventing premature differentiation, and is required for cerebellar histogenesis, fissure formation, cerebellar layer organization and cortical development. Plays a role in neuronal progenitor cell survival, potentially via promotion of mTOR signaling. Plays a role in the radial and longitudinal extension of the myelin sheath in Schwann cells. May modulate SC6A1/GAT1-mediated GABA uptake by stabilizing the transporter. May play a role in the T-cell receptor-mediated activation of NF-kappa-B. Required for localization of EZR to the apical membrane of parietal cells and may play a role in the dynamic remodeling of the apical cytoskeleton. Required for the normal polarized localization of the vesicular marker STX4. Required for the correct trafficking of the myelin proteins PMP22 and MAG. Involved in promoting phosphorylation and cytoplasmic retention of transcriptional coactivators YAP1 and WWTR1/TAZ which leads to suppression of TGFB1-dependent transcription of target genes such as CCN2/CTGF, SERPINE1/PAI1, SNAI1/SNAIL1 and SMAD7. The sequence is that of Protein PALS1 from Canis lupus familiaris (Dog).